A 230-amino-acid chain; its full sequence is Phosducin-like protein 1 (230 aa).

Met1 carries the post-translational modification N-acetylmethionine. A Phosducin domain is found at 16 to 166 (AEKDKHTTVD…VVGYKNGLEK (151 aa)). The stretch at 25–79 (DSDDKSSGEENLDELLNELDRELDEDHEFLSAYRSERLQQISDHLKQVKKNVEDD) forms a coiled coil. The interval 81-230 (YGRLQCIDNE…RSESDSDLDI (150 aa)) is thioredoxin fold.

This sequence belongs to the phosducin family. As to quaternary structure, interacts with the G protein beta-gamma subunit complex (STE4-STE18 complex).

The protein resides in the cytoplasm. In terms of biological role, not essential for growth. Inhibits early G-protein signaling events following pheromone stimulation. May help create heterodimerizable beta-tubulin by facilitating the efficient transfer of nascent beta-tubulin polypeptides to the folding apparatus. The protein is Phosducin-like protein 1 (PLP1) of Saccharomyces cerevisiae (strain ATCC 204508 / S288c) (Baker's yeast).